A 417-amino-acid chain; its full sequence is Serine hydroxymethyltransferase (417 aa).

(6S)-5,6,7,8-tetrahydrofolate contacts are provided by residues Leu121 and 125–127 (GHL). The residue at position 229 (Lys229) is an N6-(pyridoxal phosphate)lysine. (6S)-5,6,7,8-tetrahydrofolate is bound at residue 355–357 (SPF).

It belongs to the SHMT family. In terms of assembly, homodimer. The cofactor is pyridoxal 5'-phosphate.

It localises to the cytoplasm. It catalyses the reaction (6R)-5,10-methylene-5,6,7,8-tetrahydrofolate + glycine + H2O = (6S)-5,6,7,8-tetrahydrofolate + L-serine. Its pathway is one-carbon metabolism; tetrahydrofolate interconversion. It functions in the pathway amino-acid biosynthesis; glycine biosynthesis; glycine from L-serine: step 1/1. Functionally, catalyzes the reversible interconversion of serine and glycine with tetrahydrofolate (THF) serving as the one-carbon carrier. This reaction serves as the major source of one-carbon groups required for the biosynthesis of purines, thymidylate, methionine, and other important biomolecules. Also exhibits THF-independent aldolase activity toward beta-hydroxyamino acids, producing glycine and aldehydes, via a retro-aldol mechanism. The protein is Serine hydroxymethyltransferase of Shewanella denitrificans (strain OS217 / ATCC BAA-1090 / DSM 15013).